Reading from the N-terminus, the 1213-residue chain is DNA-directed RNA polymerase subunit beta' (1213 aa).

Cys60, Cys62, Cys75, and Cys78 together coordinate Zn(2+). Residues Asp450, Asp452, and Asp454 each contribute to the Mg(2+) site. Zn(2+)-binding residues include Cys819, Cys893, Cys900, and Cys903.

This sequence belongs to the RNA polymerase beta' chain family. The RNAP catalytic core consists of 2 alpha, 1 beta, 1 beta' and 1 omega subunit. When a sigma factor is associated with the core the holoenzyme is formed, which can initiate transcription. Mg(2+) serves as cofactor. The cofactor is Zn(2+).

It carries out the reaction RNA(n) + a ribonucleoside 5'-triphosphate = RNA(n+1) + diphosphate. Functionally, DNA-dependent RNA polymerase catalyzes the transcription of DNA into RNA using the four ribonucleoside triphosphates as substrates. This chain is DNA-directed RNA polymerase subunit beta', found in Streptococcus pyogenes serotype M1.